Consider the following 239-residue polypeptide: Carboxy-S-adenosyl-L-methionine synthase (239 aa).

S-adenosyl-L-methionine-binding positions include tyrosine 36, 61–63 (GCS), 111–112 (DI), asparagine 126, and arginine 193.

Belongs to the class I-like SAM-binding methyltransferase superfamily. Cx-SAM synthase family. In terms of assembly, homodimer.

The enzyme catalyses prephenate + S-adenosyl-L-methionine = carboxy-S-adenosyl-L-methionine + 3-phenylpyruvate + H2O. Catalyzes the conversion of S-adenosyl-L-methionine (SAM) to carboxy-S-adenosyl-L-methionine (Cx-SAM). The sequence is that of Carboxy-S-adenosyl-L-methionine synthase from Nitratiruptor sp. (strain SB155-2).